The sequence spans 417 residues: Tol-Pal system protein TolB (417 aa).

A signal peptide spans 1–16 (MKYLWLFLIYAIGLFA).

The protein belongs to the TolB family. In terms of assembly, the Tol-Pal system is composed of five core proteins: the inner membrane proteins TolA, TolQ and TolR, the periplasmic protein TolB and the outer membrane protein Pal. They form a network linking the inner and outer membranes and the peptidoglycan layer.

The protein localises to the periplasm. Part of the Tol-Pal system, which plays a role in outer membrane invagination during cell division and is important for maintaining outer membrane integrity. This Helicobacter pylori (strain J99 / ATCC 700824) (Campylobacter pylori J99) protein is Tol-Pal system protein TolB.